Here is a 1915-residue protein sequence, read N- to C-terminus: Protein TIC 214 (1915 aa).

Helical transmembrane passes span 18–38 (IINSVVVVGLYYGFLTTFSIG), 64–84 (FITGQLMMFISIYYAPLHLAL), 90–110 (ITVLVLPYLLFHFFWHNHKYF), 126–146 (LNIQCVFLNNLIFPLFNHFIL), 174–194 (VGWLIGHILFMKWVELVLIWI), and 230–250 (IFSILLFITCIYYLGRMPSTL). 2 disordered regions span residues 260–319 (KMKQ…EIRV) and 1566–1631 (NKNI…GSVL). Over residues 267–277 (SEEETDVEIET) the composition is skewed to acidic residues. The span at 279–288 (SETKETKEEQ) shows a compositional bias: basic and acidic residues. Positions 304 to 315 (EKEDPDKIDETE) are enriched in acidic residues. The span at 1587–1601 (KSLELENRNQEEKES) shows a compositional bias: basic and acidic residues. The segment covering 1602–1631 (SSQGDLGSNAQNQGNLGPNAQNQGNLGSVL) has biased composition (polar residues).

This sequence belongs to the TIC214 family. In terms of assembly, part of the Tic complex.

Its subcellular location is the plastid. The protein localises to the chloroplast inner membrane. Its function is as follows. Involved in protein precursor import into chloroplasts. May be part of an intermediate translocation complex acting as a protein-conducting channel at the inner envelope. The chain is Protein TIC 214 from Platanus occidentalis (Sycamore).